Here is a 746-residue protein sequence, read N- to C-terminus: tRNA (cytosine(34)-C(5))-methyltransferase (746 aa).

The segment at 1-30 (MGRNQKQNFFAARKRQKRENGPKRTDRQAQ) is disordered. Positions 18–30 (RENGPKRTDRQAQ) are enriched in basic and acidic residues. Residues 184–190 (CAAPGSK), Asp216, Asp243, and Asp270 contribute to the S-adenosyl-L-methionine site. Cys323 functions as the Nucleophile in the catalytic mechanism. Disordered regions lie at residues 454–475 (QPAA…SVPW) and 701–746 (SAEA…VATS). Over residues 463–472 (ADGKPIEEKS) the composition is skewed to basic and acidic residues. Acidic residues predominate over residues 704 to 714 (AEADSSGDGDA). The span at 731–746 (AETTGTPMDTEVVATS) shows a compositional bias: polar residues.

It belongs to the class I-like SAM-binding methyltransferase superfamily. RsmB/NOP family. TRM4 subfamily. As to expression, ubiquitously expressed during embryonic development. Some enrichment is observed in the proventriculus area of the foregut and in the hindgut.

Its subcellular location is the nucleus. The protein localises to the nucleolus. It catalyses the reaction cytidine(34) in tRNA precursor + S-adenosyl-L-methionine = 5-methylcytidine(34) in tRNA precursor + S-adenosyl-L-homocysteine + H(+). Its function is as follows. RNA methyltransferase that methylates tRNAs. Methylates cytosine to 5-methylcytosine (m5C) at position 34 of intron-containing tRNA(Leu)(CAA) precursors. Required for short-term memory. The polypeptide is tRNA (cytosine(34)-C(5))-methyltransferase (Drosophila melanogaster (Fruit fly)).